A 562-amino-acid polypeptide reads, in one-letter code: NAD-dependent malic enzyme (562 aa).

Residue Y101 is the Proton donor of the active site. R154 contacts NAD(+). Residue K172 is the Proton acceptor of the active site. A divalent metal cation is bound by residues E243, D244, and D267. D267 and N415 together coordinate NAD(+).

Belongs to the malic enzymes family. As to quaternary structure, homotetramer. Mg(2+) is required as a cofactor. Requires Mn(2+) as cofactor.

The enzyme catalyses (S)-malate + NAD(+) = pyruvate + CO2 + NADH. It carries out the reaction oxaloacetate + H(+) = pyruvate + CO2. This Shewanella putrefaciens (strain CN-32 / ATCC BAA-453) protein is NAD-dependent malic enzyme.